A 485-amino-acid polypeptide reads, in one-letter code: Glutamyl-tRNA(Gln) amidotransferase subunit A (485 aa).

Catalysis depends on charge relay system residues lysine 79 and serine 154. Serine 178 functions as the Acyl-ester intermediate in the catalytic mechanism.

It belongs to the amidase family. GatA subfamily. As to quaternary structure, heterotrimer of A, B and C subunits.

It carries out the reaction L-glutamyl-tRNA(Gln) + L-glutamine + ATP + H2O = L-glutaminyl-tRNA(Gln) + L-glutamate + ADP + phosphate + H(+). In terms of biological role, allows the formation of correctly charged Gln-tRNA(Gln) through the transamidation of misacylated Glu-tRNA(Gln) in organisms which lack glutaminyl-tRNA synthetase. The reaction takes place in the presence of glutamine and ATP through an activated gamma-phospho-Glu-tRNA(Gln). This Clostridium botulinum (strain ATCC 19397 / Type A) protein is Glutamyl-tRNA(Gln) amidotransferase subunit A.